The following is a 520-amino-acid chain: Protein RCC2 (520 aa).

Residues 1–78 (MPRKKGAAWE…RPATAGKAAG (78 aa)) form a disordered region. S14 bears the Phosphoserine mark. T18 carries the phosphothreonine modification. Basic residues predominate over residues 22 to 34 (GPRRRGGPAGRKR). A phosphoserine mark is found at S41, S42, S43, S44, S48, and S49. Residues 69 to 78 (RPATAGKAAG) show a composition bias toward low complexity. K90 and K122 each carry N6-acetyllysine. 7 RCC1 repeats span residues 101-163 (KGQL…SLLI), 166-217 (EGKL…ALTD), 219-269 (GSVF…LMDC), 271-345 (GNLY…VLDS), 346-399 (QKRV…AVSE), 401-445 (GGLF…VAAD), and 446-499 (ESTI…VIAR). N6-acetyllysine is present on K291. A required for interaction with RAC1 region spans residues 316–323 (KTKDGQIL). T340 carries the post-translational modification Phosphothreonine. K375 carries the N6-acetyllysine modification.

As to quaternary structure, interacts with RAC1. Interacts with nucleotide-free and with GDP and GTP-bound forms of RAC1, with a slight preference for GDP-bound RAC1. Binds preferentially to the nucleotide-free form of RAC1. Interacts with CORO1C. Interacts with microtubules.

It localises to the nucleus. The protein localises to the nucleolus. It is found in the cytoplasm. Its subcellular location is the cytoskeleton. The protein resides in the chromosome. It localises to the centromere. The protein localises to the spindle. It is found in the midbody. Its subcellular location is the cell membrane. Its function is as follows. Multifunctional protein that may affect its functions by regulating the activity of small GTPases, such as RAC1 and RALA. Required for normal progress through the cell cycle, both during interphase and during mitosis. Required for the presence of normal levels of MAD2L1, AURKB and BIRC5 on inner centromeres during mitosis, and for normal attachment of kinetochores to mitotic spindles. Required for normal organization of the microtubule cytoskeleton in interphase cells. Functions as a guanine nucleotide exchange factor (GEF) for RALA. Interferes with the activation of RAC1 by guanine nucleotide exchange factors. Prevents accumulation of active, GTP-bound RAC1, and suppresses RAC1-mediated reorganization of the actin cytoskeleton and formation of membrane protrusions. Required for normal cellular responses to contacts with the extracellular matrix of adjacent cells, and for directional cell migration in response to a fibronectin gradient (in vitro). The polypeptide is Protein RCC2 (Rcc2) (Mus musculus (Mouse)).